Reading from the N-terminus, the 1866-residue chain is Protein NLRC5 (1866 aa).

The interval 105–135 is disordered; that stretch reads GAEGKSQPESQLHHGLKRPHQSCGSSPRRKQ. Residues 222 to 539 form the NACHT domain; it reads RVTVLLGKAG…PKVNKDTLTQ (318 aa). ATP is bound at residue 228-235; the sequence is GKAGMGKT. LRR repeat units lie at residues 599–622, 713–737, 741–765, 769–792, 869–892, 897–921, 930–953, 976–1000, 1004–1026, 1031–1058, 1138–1161, 1162–1184, 1242–1265, 1272–1294, 1462–1488, 1493–1516, 1521–1544, 1554–1577, 1578–1600, 1605–1628, 1633–1656, 1661–1684, 1687–1714, 1715–1739, 1741–1762, and 1795–1818; these read LKKL…VDET, MGRL…LVKA, CPQL…IVEV, LPRL…CLAR, GPHL…LMAE, LHIA…VLRA, ELHI…EQKG, SRRM…ALGG, LGHL…RLAQ, LGAL…CFST, LELQ…CLPQ, LPQL…FLLA, CKDL…CLLE, ISGL…LLET, CARL…LLQS, LSEL…HLAS, CHHL…ALMR, RLDL…LSQM, TCLQ…HLSE, ATSL…HLAT, LPEL…QLAE, CRRL…GLAQ, PQHL…ALDG, SPHL…CMEL, LLRQ…LLTS, and MGRL…LLAE.

It belongs to the NLRP family. Interacts with CHUK and IKBKB; prevents CHUK and IKBKB phosphorylation and inhibits their kinase activity. Interacts with RIGI and IFIH1; blocks the interaction of MAVS to RIGI. As to expression, expressed in spleen, thymus, lung, brain, tonsil, heart and prostate.

Its subcellular location is the cytoplasm. Probable regulator of the NF-kappa-B and type I interferon signaling pathways. May also regulate the type II interferon signaling pathway. Plays a role in homeostatic control of innate immunity and in antiviral defense mechanisms. This is Protein NLRC5 (NLRC5) from Homo sapiens (Human).